The sequence spans 431 residues: Phosphoribosylamine--glycine ligase (431 aa).

One can recognise an ATP-grasp domain in the interval 109–316 (KDFLARHGIP…LVDLLEAAID (208 aa)). Position 135–196 (135–196 (VREKGTPIVV…EEFLDGEEAS (62 aa))) interacts with ATP. Positions 286 and 288 each coordinate Mg(2+).

Belongs to the GARS family. Requires Mg(2+) as cofactor. Mn(2+) is required as a cofactor.

The catalysed reaction is 5-phospho-beta-D-ribosylamine + glycine + ATP = N(1)-(5-phospho-beta-D-ribosyl)glycinamide + ADP + phosphate + H(+). It functions in the pathway purine metabolism; IMP biosynthesis via de novo pathway; N(1)-(5-phospho-D-ribosyl)glycinamide from 5-phospho-alpha-D-ribose 1-diphosphate: step 2/2. The chain is Phosphoribosylamine--glycine ligase from Xanthomonas axonopodis pv. citri (strain 306).